Here is a 506-residue protein sequence, read N- to C-terminus: Methylthioalkylmalate synthase 1, chloroplastic (506 aa).

The transit peptide at 1 to 49 directs the protein to the chloroplast; the sequence is MASSLLTSSVMIPTTGSTVVGRSVLPFQSSLHSLRLTHSYKNPALFISC. The region spanning 85–359 is the Pyruvate carboxyltransferase domain; that stretch reads VRVFDTTLRD…YTKIDTRQIM (275 aa). Ser-98 carries the post-translational modification Phosphoserine.

Belongs to the alpha-IPM synthase/homocitrate synthase family. In terms of assembly, monomer. Mn(2+) serves as cofactor. As to expression, highly expressed in leaves, flowers, roots and siliques. Not detected in flowers in PubMed:12432038.

The protein localises to the plastid. It is found in the chloroplast. It catalyses the reaction an omega-(methylsulfanyl)-2-oxoalkanoate + acetyl-CoA + H2O = a 2-(omega-methylsulfanyl)alkylmalate + CoA + H(+). Its activity is regulated as follows. 1 mM DTT required for activity. Activated by ATP and inhibited by iodoacetamide. Its function is as follows. Determines the side chain length of aliphatic glucosinolate structures. Catalyzes exclusively the condensation reactions of both the first and second methionine carbon chain elongation. The chain is Methylthioalkylmalate synthase 1, chloroplastic (MAM1) from Arabidopsis thaliana (Mouse-ear cress).